Here is a 1027-residue protein sequence, read N- to C-terminus: Presequence protease, mitochondrial (1027 aa).

Residues Met-1–Trp-22 constitute a mitochondrion transit peptide. His-98 is a Zn(2+) binding site. Residue Glu-101 is the Proton acceptor of the active site. Residues His-102 and Glu-199 each contribute to the Zn(2+) site. A disulfide bridge connects residues Cys-113 and Cys-550. A disordered region spans residues Arg-803–Thr-827. Residues Ser-814–Ser-825 show a composition bias toward low complexity.

It belongs to the peptidase M16 family. PreP subfamily. In terms of assembly, monomer and homodimer; homodimerization is induced by binding of the substrate. Zn(2+) is required as a cofactor. In terms of processing, a disulfide bond locks the enzyme in the closed conformation preventing substrate entry into the catalytic chamber.

It localises to the mitochondrion matrix. Its activity is regulated as follows. Mainly exists in a closed and catalytically competent conformation but a closed-to-open switch allows substrate entry into the catalytic chamber. Substrate binding induces closure and dimerization. A disulfide bond may lock the enzyme in a closed conformation preventing substrate entry into the catalytic chamber, participating in redox regulation of the enzyme. Inhibited by metal-chelating agents. Inhibited by nickel and zinc excess, and slightly activated by manganese. Its function is as follows. Metalloendopeptidase of the mitochondrial matrix that functions in peptide cleavage and degradation rather than in protein processing. Has an ATP-independent activity. Specifically cleaves peptides in the range of 5 to 65 residues. Shows a preference for cleavage after small polar residues and before basic residues, but without any positional preference. Degrades the transit peptides of mitochondrial proteins after their cleavage. Also degrades other unstructured peptides. The polypeptide is Presequence protease, mitochondrial (pitrm1) (Xenopus laevis (African clawed frog)).